The following is an 88-amino-acid chain: MRLILSLPVLVVVLSMVLEGPAPAQAAGEISSTFERIPDKLKEFGNTLEDKARAAIESIKKSDIPAKTRNWFSEAFKKVKEHLKTAFS.

The N-terminal stretch at 1 to 26 (MRLILSLPVLVVVLSMVLEGPAPAQA) is a signal peptide.

The protein belongs to the apolipoprotein C1 family. In terms of tissue distribution, expressed in the liver.

The protein resides in the secreted. In terms of biological role, inhibitor of lipoprotein binding to the low density lipoprotein (LDL) receptor, LDL receptor-related protein, and very low density lipoprotein (VLDL) receptor. Associates with high density lipoproteins (HDL) and the triacylglycerol-rich lipoproteins in the plasma and makes up about 10% of the protein of the VLDL and 2% of that of HDL. Appears to interfere directly with fatty acid uptake and is also the major plasma inhibitor of cholesteryl ester transfer protein (CETP). Binds free fatty acids and reduces their intracellular esterification. Modulates the interaction of APOE with beta-migrating VLDL and inhibits binding of beta-VLDL to the LDL receptor-related protein. This Canis lupus familiaris (Dog) protein is Apolipoprotein C-I (APOC1).